A 303-amino-acid chain; its full sequence is Aspartate carbamoyltransferase catalytic subunit (303 aa).

Carbamoyl phosphate-binding residues include Arg-49 and Thr-50. An L-aspartate-binding site is contributed by Lys-77. 3 residues coordinate carbamoyl phosphate: Arg-99, His-126, and Gln-129. Residues Arg-159 and Arg-211 each coordinate L-aspartate. 2 residues coordinate carbamoyl phosphate: Ser-252 and Pro-253.

The protein belongs to the aspartate/ornithine carbamoyltransferase superfamily. ATCase family. In terms of assembly, heterododecamer (2C3:3R2) of six catalytic PyrB chains organized as two trimers (C3), and six regulatory PyrI chains organized as three dimers (R2).

The catalysed reaction is carbamoyl phosphate + L-aspartate = N-carbamoyl-L-aspartate + phosphate + H(+). The protein operates within pyrimidine metabolism; UMP biosynthesis via de novo pathway; (S)-dihydroorotate from bicarbonate: step 2/3. Functionally, catalyzes the condensation of carbamoyl phosphate and aspartate to form carbamoyl aspartate and inorganic phosphate, the committed step in the de novo pyrimidine nucleotide biosynthesis pathway. The chain is Aspartate carbamoyltransferase catalytic subunit from Listeria welshimeri serovar 6b (strain ATCC 35897 / DSM 20650 / CCUG 15529 / CIP 8149 / NCTC 11857 / SLCC 5334 / V8).